The sequence spans 290 residues: Sodium/potassium-transporting ATPase subunit beta-2 (290 aa).

At 1–39 the chain is on the cytoplasmic side; it reads MVIQKEKKSCGQVVEEWKEFVWNPRTHQFMGRTGTSWAF. Residues 40–67 form a helical; Signal-anchor for type II membrane protein membrane-spanning segment; the sequence is ILLFYLVFYGFLTAMFTLTMWVMLQTVS. Over 68-290 the chain is Extracellular; the sequence is DHTPKYQDRL…VAFKLRINKT (223 aa). 2 N-linked (GlcNAc...) asparagine glycosylation sites follow: asparagine 96 and asparagine 118. Residues cysteine 129 and cysteine 150 are joined by a disulfide bond. Asparagine 153 and asparagine 159 each carry an N-linked (GlcNAc...) asparagine glycan. The cysteines at positions 160 and 177 are disulfide-linked. Asparagine 193, asparagine 197, and asparagine 238 each carry an N-linked (GlcNAc...) asparagine glycan. Residues 193–290 are immunoglobulin-like; it reads NQSMNVTCAG…VAFKLRINKT (98 aa). Residues cysteine 200 and cysteine 261 are joined by a disulfide bond.

This sequence belongs to the X(+)/potassium ATPases subunit beta family. As to quaternary structure, the sodium/potassium-transporting ATPase is composed of a catalytic alpha subunit, an auxiliary non-catalytic beta subunit and an additional regulatory subunit. Interacts with isoform 2 of BSG.

It is found in the cell membrane. This is the non-catalytic component of the active enzyme, which catalyzes the hydrolysis of ATP coupled with the exchange of Na(+) and K(+) ions across the plasma membrane. The exact function of the beta-2 subunit is not known. Its function is as follows. Mediates cell adhesion of neurons and astrocytes, and promotes neurite outgrowth. In Homo sapiens (Human), this protein is Sodium/potassium-transporting ATPase subunit beta-2 (ATP1B2).